Here is a 303-residue protein sequence, read N- to C-terminus: Elongation factor Ts (303 aa).

The segment at 80–83 (TDFV) is involved in Mg(2+) ion dislocation from EF-Tu.

The protein belongs to the EF-Ts family.

The protein resides in the cytoplasm. Its function is as follows. Associates with the EF-Tu.GDP complex and induces the exchange of GDP to GTP. It remains bound to the aminoacyl-tRNA.EF-Tu.GTP complex up to the GTP hydrolysis stage on the ribosome. The protein is Elongation factor Ts of Clostridium perfringens (strain SM101 / Type A).